Here is a 148-residue protein sequence, read N- to C-terminus: Transcriptional repressor NrdR (148 aa).

A disordered region spans residues 1–22 (MKCPYCSAPDSKVVNSRPSDDG). A zinc finger lies at 3 to 34 (CPYCSAPDSKVVNSRPSDDGASIRRRRECLNC). The ATP-cone domain occupies 49–136 (LMVVKRSGPR…VYRDFDSLER (88 aa)).

It belongs to the NrdR family. Zn(2+) is required as a cofactor.

In terms of biological role, negatively regulates transcription of bacterial ribonucleotide reductase nrd genes and operons by binding to NrdR-boxes. In Deinococcus deserti (strain DSM 17065 / CIP 109153 / LMG 22923 / VCD115), this protein is Transcriptional repressor NrdR.